A 371-amino-acid chain; its full sequence is Opsin, ultraviolet-sensitive (371 aa).

Over 1–52 (MSNDSIHWEARYLPAGPPRLLGWNVPAEELIHIPEHWLVYPEPNPSLHYLLA) the chain is Extracellular. A glycan (N-linked (GlcNAc...) asparagine) is linked at N3. A helical transmembrane segment spans residues 53-73 (LLYILFTFLALLGNGLVIWIF). Residues 74-84 (CAAKSLRTPSN) are Cytoplasmic-facing. A helical membrane pass occupies residues 85-105 (MFVVNLAICDFFMMIKTPIFI). Residues 106 to 121 (YNSFNTGFALGNLGCQ) are Extracellular-facing. C120 and C197 are oxidised to a cystine. Residues 122 to 142 (IFAVIGSLTGIGAAITNAAIA) form a helical membrane-spanning segment. Residues 143 to 161 (YDRYSTIARPLDGKLSRGQ) are Cytoplasmic-facing. A helical transmembrane segment spans residues 162-182 (VILFIVLIWTYTIPWALMPVM). At 183 to 209 (GVWGRFVPEGFLTSCSFDYLTDTNEIR) the chain is on the extracellular side. A helical membrane pass occupies residues 210–230 (IFVATIFTFSYCIPMILIIYY). Topologically, residues 231–278 (YSQIVSHVVNHEKALREQAKKMNVDSLRSNANTSSQSAEIRIAKAAIT) are cytoplasmic. A helical membrane pass occupies residues 279–299 (ICFLYVLSWTPYGVMSMIGAF). At 300–302 (GNK) the chain is on the extracellular side. A helical transmembrane segment spans residues 303-323 (ALLTPGVTMIPACTCKAVACL). Residue K318 is modified to N6-(retinylidene)lysine. Topologically, residues 324–371 (DPYVYAISHPKYRLELQKRLPWLELQEKPISDSTSTTTETVNTPPASS) are cytoplasmic.

It belongs to the G-protein coupled receptor 1 family. Opsin subfamily. Phosphorylated on some or all of the serine and threonine residues present in the C-terminal region. Expressed in the dorsal region of the retina.

It localises to the membrane. In terms of biological role, visual pigments are the light-absorbing molecules that mediate vision. They consist of an apoprotein, opsin, covalently linked to 11-cis-retinal. The protein is Opsin, ultraviolet-sensitive (UVOP) of Apis mellifera (Honeybee).